The sequence spans 679 residues: Mitotic interactor and substrate of PLK1 (679 aa).

Position 78 is a phosphoserine; by CDK1; in vitro (S78). Disordered stretches follow at residues 151 to 182 and 206 to 245; these read AVRK…TPLE and ANKG…GHVV. Positions 153 to 163 are enriched in polar residues; that stretch reads RKSSTVATLQG. Position 156 is a phosphoserine (S156). A phosphothreonine; by CDK1; in vitro mark is found at T164 and T172. T179 bears the Phosphothreonine mark. The residue at position 214 (S214) is a Phosphoserine; by CDK1; in vitro. Position 219 is a phosphothreonine (T219). T224 is subject to Phosphothreonine; by CDK1; in vitro. Residue S284 is modified to Phosphoserine; by CDK1; in vitro. At T287 the chain carries Phosphothreonine; by CDK1; in vitro. Position 348 is a phosphoserine (S348). Basic and acidic residues predominate over residues 360 to 371; that stretch reads QREEDHRREGLH. Residues 360–419 form a disordered region; that stretch reads QREEDHRREGLHVGRASTPDWVSEGPQPGLRRALSSDSILSPAPDARAADPAPEVRKVNR. At T377 the chain carries Phosphothreonine; by CDK1; in vitro. Position 382 is a phosphoserine; by CDK1; in vitro (S382). A phosphoserine; by PLK1; in vitro mark is found at S394, S395, and S397. S400 carries the phosphoserine modification. Low complexity predominate over residues 401–411; the sequence is PAPDARAADPA. Phosphoserine is present on S430. Residues 447–494 form a disordered region; that stretch reads PSSLSTAEAKAATSPKATMSPRHLSESSGKPLSTKQEASKPPRGCPQA. A Phosphoserine; by PLK1; in vitro modification is found at S471. The segment covering 472–482 has biased composition (polar residues); sequence ESSGKPLSTKQ. Residues S541 and S543 each carry the phosphoserine modification. Positions 545-569 form a coiled coil; that stretch reads DLLERERESVLRREQEVAEERRNAL. Positions 557-567 are enriched in basic and acidic residues; it reads REQEVAEERRN. Disordered stretches follow at residues 557–598 and 622–643; these read REQE…ITGS and DPVD…GINP. At S575 the chain carries Phosphoserine; by CDK1; in vitro. A Phosphothreonine modification is found at T577. A phosphoserine; by PLK1; in vitro mark is found at S582 and S586. Over residues 583–593 the composition is skewed to low complexity; the sequence is DQNSRSSSQAS. S675 carries the phosphoserine modification.

The protein belongs to the MISP family. Associates with F-actin. Interacts with DCTN1; this interaction regulates DCTN1 distribution at the cell cortex. Interacts with PTK2/FAK and MAPRE1. Phosphorylated by CDK1 and PLK1. CDK1 is the priming kinase for PLK1 phosphorylation. Phosphorylation by PLK1 is required for proper spindle orientation at metaphase.

The protein resides in the cell junction. It is found in the focal adhesion. Its subcellular location is the cytoplasm. It localises to the cytoskeleton. The protein localises to the cell cortex. In terms of biological role, plays a role in mitotic spindle orientation and mitotic progression. Regulates the distribution of dynactin at the cell cortex in a PLK1-dependent manner, thus stabilizing cortical and astral microtubule attachments required for proper mitotic spindle positioning. May link microtubules to the actin cytospkeleton and focal adhesions. May be required for directed cell migration and centrosome orientation. May also be necessary for proper stacking of the Golgi apparatus. The sequence is that of Mitotic interactor and substrate of PLK1 from Homo sapiens (Human).